A 163-amino-acid chain; its full sequence is Nucleotide-binding protein Spro_1084 (163 aa).

The protein belongs to the YajQ family.

Its function is as follows. Nucleotide-binding protein. The sequence is that of Nucleotide-binding protein Spro_1084 from Serratia proteamaculans (strain 568).